A 41-amino-acid polypeptide reads, in one-letter code: MKIKNSLKALKERHRNNRLVRRKGRVYILNKTNPRFRARQG.

It belongs to the bacterial ribosomal protein bL36 family.

The chain is Large ribosomal subunit protein bL36 from Bartonella tribocorum (strain CIP 105476 / IBS 506).